The following is a 969-amino-acid chain: Chromosome transmission fidelity protein 18 homolog (969 aa).

Residues 30 to 97 form a disordered region; sequence EGTRDQAPPG…APSSPMVKRP (68 aa). Threonine 51 carries the phosphothreonine modification. Serine 221 bears the Phosphoserine mark. Disordered regions lie at residues 250–269 and 318–340; these read SEGE…APGQ and RKPR…GKWK. The segment covering 257 to 268 has biased composition (low complexity); it reads LEGPPAEEPAPG. Position 369–376 (369–376) interacts with ATP; sequence GPPGLGKT. The disordered stretch occupies residues 856-889; that stretch reads ARSGPQVDQGSSGPASLWTDSGEKGTRQPAPRNH. Over residues 876–889 the composition is skewed to basic and acidic residues; sequence SGEKGTRQPAPRNH.

Belongs to the activator 1 small subunits family. CTF18 subfamily. In terms of assembly, component of the CTF18-RFC complex, which consists of CTF18, CTF8, DCC1, RFC2, RFC3, RFC4 and RFC5. During assembly of the CTF18-RFC complex, CTF18 may first assemble into a subcomplex with RFC2, RFC3, RFC4 and RFC5. CTF18 then interacts directly with CTF8, which in turn interacts with DCC1. The CTF18-RFC complex associates with PCNA and with DNA polymerase POLH. The CTF18-RFC complex does not interact with the Rad9/Rad1/Hus1 complex. CTF18 interacts with SMC1A and RAD21. Interacts with DDX11.

It is found in the nucleus. In terms of biological role, chromosome cohesion factor involved in sister chromatid cohesion and fidelity of chromosome transmission. Component of one of the cell nuclear antigen loader complexes, CTF18-replication factor C (CTF18-RFC), which consists of CTF18, CTF8, DCC1, RFC2, RFC3, RFC4 and RFC5. The CTF18-RFC complex binds to single-stranded and primed DNAs and has weak ATPase activity that is stimulated by the presence of primed DNA, replication protein A (RPA) and by proliferating cell nuclear antigen (PCNA). The CTF18-RFC complex catalyzes the ATP-dependent loading of PCNA onto primed and gapped DNA. Interacts with and stimulates DNA polymerase POLH. During DNA repair synthesis, involved in loading DNA polymerase POLE at the sites of local damage. This chain is Chromosome transmission fidelity protein 18 homolog (Chtf18), found in Mus musculus (Mouse).